We begin with the raw amino-acid sequence, 318 residues long: SPX domain-containing protein 4 (318 aa).

In terms of domain architecture, SPX spans 1–187 (MKFGKEFRTH…GGLLRLPFTQ (187 aa)). A compositionally biased stretch (low complexity) spans 226-237 (SAVQAHSSSHQH). 2 disordered regions span residues 226-247 (SAVQ…AETS) and 284-318 (SSLL…GPSH). Positions 305–318 (NKDDSEKEDTGPSH) are enriched in basic and acidic residues.

This chain is SPX domain-containing protein 4 (SPX4), found in Arabidopsis thaliana (Mouse-ear cress).